A 92-amino-acid polypeptide reads, in one-letter code: Bombyxin A-7 (92 aa).

A signal peptide spans 1-19; sequence MKLLLAIALMLTIVMWVST. At Gln-20 the chain carries Pyrrolidone carboxylic acid. Disulfide bonds link Cys-29-Cys-79, Cys-41-Cys-92, and Cys-78-Cys-83. Positions 50–70 are cleaved as a propeptide — c peptide like; that stretch reads SDAQYASYGSAWLMPYSEGRG.

Belongs to the insulin family. Heterodimer of a B chain and an A chain linked by two disulfide bonds.

Its subcellular location is the secreted. Its function is as follows. Brain peptide responsible for activation of prothoracic glands to produce ecdysone in insects. In Bombyx mori (Silk moth), this protein is Bombyxin A-7 (BBXA7).